A 90-amino-acid polypeptide reads, in one-letter code: UPF0213 protein Reut_B5558 (90 aa).

Positions 5-80 (RQWYLYLLEC…KRMSSAQKIA (76 aa)) constitute a GIY-YIG domain.

It belongs to the UPF0213 family.

The protein is UPF0213 protein Reut_B5558 of Cupriavidus pinatubonensis (strain JMP 134 / LMG 1197) (Cupriavidus necator (strain JMP 134)).